A 158-amino-acid chain; its full sequence is SsrA-binding protein (158 aa).

It belongs to the SmpB family.

It localises to the cytoplasm. Its function is as follows. Required for rescue of stalled ribosomes mediated by trans-translation. Binds to transfer-messenger RNA (tmRNA), required for stable association of tmRNA with ribosomes. tmRNA and SmpB together mimic tRNA shape, replacing the anticodon stem-loop with SmpB. tmRNA is encoded by the ssrA gene; the 2 termini fold to resemble tRNA(Ala) and it encodes a 'tag peptide', a short internal open reading frame. During trans-translation Ala-aminoacylated tmRNA acts like a tRNA, entering the A-site of stalled ribosomes, displacing the stalled mRNA. The ribosome then switches to translate the ORF on the tmRNA; the nascent peptide is terminated with the 'tag peptide' encoded by the tmRNA and targeted for degradation. The ribosome is freed to recommence translation, which seems to be the essential function of trans-translation. The chain is SsrA-binding protein from Roseiflexus castenholzii (strain DSM 13941 / HLO8).